The sequence spans 198 residues: Single-stranded DNA cytosine deaminase (198 aa).

The Bipartite nuclear localization signal signature appears at 1-30 (MDSLLMKQKKFLYHFKNVRWAKGRHETYLC). An interaction with SUPT6H region spans residues 2 to 26 (DSLLMKQKKFLYHFKNVRWAKGRHE). The region spanning 23–129 (GRHETYLCYV…KAEPEGLRRL (107 aa)) is the CMP/dCMP-type deaminase domain. T27 bears the Phosphothreonine; by PKA mark. Residue S38 is modified to Phosphoserine; by PKA. The important for interaction with CTNNBL1 stretch occupies residues 39–42 (ATSC). Zn(2+) is bound at residue H56. E58 functions as the Proton donor in the catalytic mechanism. Zn(2+) contacts are provided by C87 and C90. Residues 88-116 (YDCARHVAEFLRWNPNLSLRIFTARLYFC) form a required for interaction with RNF126 region. The Nuclear export signal signature appears at 183-198 (LYEVDDLRDAFRMLGF).

The protein belongs to the cytidine and deoxycytidylate deaminase family. Interacts with CTNNBL1; the interaction is important for the immunoglobulin switch activity of AICDA. Interacts (via its NLS) with KPNA1. Interacts with PKA/PRKACA and PRKAR1A/PKR1. Interacts with SUPT6H, TRIM28 and NCL. Directly interacts with MCM3AP/GANP; this interaction may favor AICDA recruitment to immunoglobulin variable region genes, hence promoting somatic hypermutations. The cofactor is Zn(2+). Post-translationally, ser-38 is the major site whereas Thr-27 is the minor site of phosphorylation. Phosphorylation regulates its class-switch recombination activity. Probably monoubiquitinated on several residues by RNF126. As to expression, expressed in germinal center B-cells (at protein level).

The protein resides in the nucleus. The protein localises to the cytoplasm. The catalysed reaction is a 2'-deoxycytidine in single-stranded DNA + H2O + H(+) = a 2'-deoxyuridine in single-stranded DNA + NH4(+). In terms of biological role, single-stranded DNA-specific cytidine deaminase. Involved in somatic hypermutation (SHM), gene conversion, and class-switch recombination (CSR) in B-lymphocytes by deaminating C to U during transcription of Ig-variable (V) and Ig-switch (S) region DNA. Required for several crucial steps of B-cell terminal differentiation necessary for efficient antibody responses. May also play a role in the epigenetic regulation of gene expression by participating in DNA demethylation. The polypeptide is Single-stranded DNA cytosine deaminase (Aicda) (Mus musculus (Mouse)).